Here is a 280-residue protein sequence, read N- to C-terminus: Proteasome subunit beta 2 (280 aa).

The propeptide at 1 to 52 (MTERERGQGLPAEFFAVGTASFVELLSRTAPQLLPVNRVRDGSHPMPDIPHG) is removed in mature form; by autocatalysis. Catalysis depends on T53, which acts as the Nucleophile.

It belongs to the peptidase T1B family. As to quaternary structure, the 20S proteasome core is composed of 14 alpha and 14 beta subunits that assemble into four stacked heptameric rings, resulting in a barrel-shaped structure. The two inner rings, each composed of seven catalytic beta subunits, are sandwiched by two outer rings, each composed of seven alpha subunits. The catalytic chamber with the active sites is on the inside of the barrel. Has a gated structure, the ends of the cylinder being occluded by the N-termini of the alpha-subunits. Is capped by the proteasome-associated ATPase, ARC.

Its subcellular location is the cytoplasm. It carries out the reaction Cleavage of peptide bonds with very broad specificity.. It functions in the pathway protein degradation; proteasomal Pup-dependent pathway. With respect to regulation, the formation of the proteasomal ATPase ARC-20S proteasome complex, likely via the docking of the C-termini of ARC into the intersubunit pockets in the alpha-rings, may trigger opening of the gate for substrate entry. Interconversion between the open-gate and close-gate conformations leads to a dynamic regulation of the 20S proteasome proteolysis activity. Its function is as follows. Component of the proteasome core, a large protease complex with broad specificity involved in protein degradation. The protein is Proteasome subunit beta 2 of Thermomonospora curvata (strain ATCC 19995 / DSM 43183 / JCM 3096 / KCTC 9072 / NBRC 15933 / NCIMB 10081 / Henssen B9).